The sequence spans 445 residues: Phosphoglucosamine mutase (445 aa).

Ser100 acts as the Phosphoserine intermediate in catalysis. Mg(2+) contacts are provided by Ser100, Asp240, Asp242, and Asp244. Phosphoserine is present on Ser100.

It belongs to the phosphohexose mutase family. The cofactor is Mg(2+). Activated by phosphorylation.

The catalysed reaction is alpha-D-glucosamine 1-phosphate = D-glucosamine 6-phosphate. Catalyzes the conversion of glucosamine-6-phosphate to glucosamine-1-phosphate. The chain is Phosphoglucosamine mutase from Pelotomaculum thermopropionicum (strain DSM 13744 / JCM 10971 / SI).